The following is a 365-amino-acid chain: tRNA/tmRNA (uracil-C(5))-methyltransferase (365 aa).

S-adenosyl-L-methionine contacts are provided by Gln189, Tyr217, Asn222, Glu238, and Asp298. The active-site Nucleophile is Cys323. Residue Glu357 is the Proton acceptor of the active site.

It belongs to the class I-like SAM-binding methyltransferase superfamily. RNA M5U methyltransferase family. TrmA subfamily.

It carries out the reaction uridine(54) in tRNA + S-adenosyl-L-methionine = 5-methyluridine(54) in tRNA + S-adenosyl-L-homocysteine + H(+). The catalysed reaction is uridine(341) in tmRNA + S-adenosyl-L-methionine = 5-methyluridine(341) in tmRNA + S-adenosyl-L-homocysteine + H(+). In terms of biological role, dual-specificity methyltransferase that catalyzes the formation of 5-methyluridine at position 54 (m5U54) in all tRNAs, and that of position 341 (m5U341) in tmRNA (transfer-mRNA). This Shewanella woodyi (strain ATCC 51908 / MS32) protein is tRNA/tmRNA (uracil-C(5))-methyltransferase.